Reading from the N-terminus, the 262-residue chain is Abhydrolase domain-containing protein AKT2 (262 aa).

Residues 260–262 carry the Peroxisomal targeting signal type 1 motif; that stretch reads SKL.

It belongs to the AB hydrolase superfamily. AKT2 hydrolase family.

The protein resides in the peroxisome. It participates in mycotoxin biosynthesis. Functionally, abhydrolase domain-containing protein; part of the gene clusters that mediate the biosynthesis of the host-selective toxins (HSTs) AK-toxins responsible for Japanese pear black spot disease by the Japanese pear pathotype. AK-toxins are esters of 9,10-epoxy 8-hydroxy 9-methyldecatrienoic acid (EDA). On cellular level, AK-toxins affect plasma membrane of susceptible cells and cause a sudden increase in loss of K(+) after a few minutes of toxin treatment. The acyl-CoA ligase AKT1, the hydrolase AKT2 and enoyl-CoA hydratase AKT3 are all involved in the biosynthesis of the AK-, AF- and ACT-toxin common 9,10-epoxy-8-hydroxy-9-methyl-decatrienoic acid (EDA) structural moiety. Part of the EDA biosynthesis occurs in the peroxisome since these 3 enzymes are localized in peroxisomes. The exact roles of the 3 enzymes, as well as of additional AK-toxin clusters enzymes, including AKT4, AKT6 and AKTS1, have still to be elucidated. The Cytochrome P450 monooxygenase AKT7 on the other side functions to limit production of EDA and AK-toxin, probably via the catalysis of a side reaction of EDA or its precursor. In Alternaria alternata (Alternaria rot fungus), this protein is Abhydrolase domain-containing protein AKT2.